The chain runs to 305 residues: Protoheme IX farnesyltransferase (305 aa).

9 helical membrane-spanning segments follow: residues 38-58 (FITT…SFLG), 60-80 (LDIV…SCAI), 110-130 (AYAF…MTTV), 131-151 (TSAV…TMWS), 161-181 (IGSV…TGTI), 185-205 (AWVL…SLAI), 227-247 (VTKR…FFLG), 249-269 (LGWP…VIGL), and 285-305 (FVYS…ITLF).

It belongs to the UbiA prenyltransferase family. Protoheme IX farnesyltransferase subfamily. In terms of assembly, interacts with CtaA.

It localises to the cell membrane. It carries out the reaction heme b + (2E,6E)-farnesyl diphosphate + H2O = Fe(II)-heme o + diphosphate. Its pathway is porphyrin-containing compound metabolism; heme O biosynthesis; heme O from protoheme: step 1/1. Converts heme B (protoheme IX) to heme O by substitution of the vinyl group on carbon 2 of heme B porphyrin ring with a hydroxyethyl farnesyl side group. In Bacillus pumilus (strain SAFR-032), this protein is Protoheme IX farnesyltransferase.